We begin with the raw amino-acid sequence, 204 residues long: UPF0637 protein LMHCC_1566 (204 aa).

Belongs to the UPF0637 family.

This chain is UPF0637 protein LMHCC_1566, found in Listeria monocytogenes serotype 4a (strain HCC23).